We begin with the raw amino-acid sequence, 732 residues long: MERQVLLSEPQEAAALYRGLSRQPSLSAACLGPEVTTQYGGLYRTVHTEWTQRDLDRMENIRFCRQYLVFHDGDSVVFAGPAGNSVETRGELLSRESPSGTMKAVLRKAGGAVSGEEKQFLEVWEKNRKLKSFNLSALEKHGPVYEDDCFGCLSWSHSETHLLYVAEKKRPKAESFFQTKALDVSASDEEMARPKKPDQAIKGDQFVFYEDWGETMVSKSIPVLCVLDIESGNISVLEGVPENVSPGQAFWAPGDTGVVFVGWWHEPFRLGIRYCTNRRSALYYVDLSGGKCELLSDESLAVCSPRLSPDQCRVVYLQYPSLAPHHQCSQLFLYDWYTKVTSLVVDIVPRQLGESFSGIYCSLLPLGCWSADSQRVVFDSVQRSRQDLFAVDTQTGSVTSLTAGGSAGSWKLLTIDRDLMVAQFSTPNLPPSLKVGFLPPAGKEQSVSWVSLEEAEPIPDIHWGIRVLHPPPDQENVQYADLDFEAILLQPSNSPDKSQVPMVVMPHGGPHSSFVTAWMLFPAMLCKMGFAVLLVNYRGSTGFGQDSILSLPGNVGHQDVKDVQFAVQQVLQEEHFDARRVALMGGSHGGFLSCHLIGQYPETYSACIARNPVINIVSMMGTTDIPDWCMVETGFPYSNDYLPDLNVLEEMLDKSPIKYIPQVKTPVLLMLGQEDRRVPFKQGLEYYHALKARNVPVRLLLYPKSTHALSEVEVESDSFMNTVLWLHTHLGS.

N-acetylmethionine is present on Met-1. A phosphoserine mark is found at Ser-185 and Ser-187. Residues Ser-587, Asp-675, and His-707 each act as charge relay system in the active site.

Belongs to the peptidase S9C family. Homotetramer.

It localises to the cytoplasm. The catalysed reaction is Cleavage of an N-acetyl or N-formyl amino acid from the N-terminus of a polypeptide.. Its activity is regulated as follows. Homotetramerization is required for activity. Tetramerization results in the formation of a gated channel which is involved in substrate selection and substrate access to the catalytic sites. Its function is as follows. This enzyme catalyzes the hydrolysis of the N-terminal peptide bond of an N-acetylated peptide to generate an N-acetylated amino acid and a peptide with a free N-terminus. It preferentially cleaves off Ac-Ala, Ac-Met and Ac-Ser. Also, involved in the degradation of oxidized and glycated proteins. This is Acylamino-acid-releasing enzyme (Apeh) from Mus musculus (Mouse).